The chain runs to 938 residues: Scm-like with four MBT domains protein 2 (938 aa).

Positions 1–32 (MERYLPVSKKRNSSSSLEKITGSANGNGTLYS) are disordered. Residues 13 to 30 (SSSSLEKITGSANGNGTL) are compositionally biased toward polar residues. MBT repeat units follow at residues 43 to 143 (FSWG…LRPP), 151 to 255 (SDWT…MDPP), 265 to 371 (FEWK…LAPP), and 379 to 475 (FNWV…LTTP). The disordered stretch occupies residues 742–836 (PEGIPESLPE…TVPTTASSNN (95 aa)). Basic and acidic residues-rich tracts occupy residues 765-777 (TEQE…DTAR) and 809-822 (RNSE…VERA). The 64-residue stretch at 868–931 (WSVTDVVRFI…CHQIERVKVA (64 aa)) folds into the SAM domain.

In terms of assembly, interacts with YY1. Interacts with methylated histones H3K9me2 and H4K20me2. In terms of tissue distribution, expressed in testis and, at much lower levels, in ovary.

It localises to the nucleus. In terms of biological role, transcriptional repressor of HOXB13 gene. The sequence is that of Scm-like with four MBT domains protein 2 (Sfmbt2) from Mus musculus (Mouse).